The primary structure comprises 56 residues: Large ribosomal subunit protein bL32 (56 aa).

Residues Met1–Gly34 are disordered.

The protein belongs to the bacterial ribosomal protein bL32 family.

In Sodalis glossinidius (strain morsitans), this protein is Large ribosomal subunit protein bL32.